Consider the following 752-residue polypeptide: MSRTPLDTVEHATATPDVELPWAELGLKKDEYERVVEILGRRPTGAELAMYSVMWSEHCSYKSSKVHLRQFGEKAPQSDAMLVGIGENAGVVDVGQGYAVTFKVESHNHPSYVEPYQGAATGVGGIVRDIIAMGARPVAVVDPLRFGAADHPDTKRVLPGVVAGIGGYGNCLGLPNIGGEVVFDACYQGNPLVNAGAIGVMRHEDIHLAKASGAGNKVILYGARTGGDGIGGASILASETFDDAKPSKRPAVQVGDPFQEKLLIECTLEAFAEKLVVGIQDLGAAGLSCATSELASNGSGGMRVTLDDVPLRDSTLSPEEILMSESQERMCAVVEPEKVDRFLEICDKWDVIATVIGEVTDGDRLEIFWHGGKIVDVDPRTVAHDGPVYERPYARPDWQDALQADDANKLPRPGTSDELKAQVLKLVGSPNQASKQWITQQYDHFVQGNTVLAQPEDSGMIRVDEESGLGVAIATDGNGRYAKLDPYTGAQLALAEAYRNVATTGAKPLAVSDCLNFGSPEDPAVMWQFAEAVRGLADGCLQLGTPVTGGNVSLYNQTGEAAIHPTPVVAVLGVIDDVARRTPVAFQEDGQLLYLLGDTREEFGGSAWSQVIHDHLGGLPPKVDLERERLLGEILISASRDGMIDSAHDLSDGGLVQAVVESALLGGKGARLVVPDGLDAFTFLFSESAGRAVVAVPRSEEVRFNDMCGARGLPVTRIGVVDGDAVEVQGEFTLPLTDLREAHESTIPGLLA.

Residue His-58 is part of the active site. Residues Tyr-61 and Lys-103 each coordinate ATP. Residue Glu-105 participates in Mg(2+) binding. Substrate-binding positions include 106–109 (SHNH) and Arg-128. The active-site Proton acceptor is His-107. Asp-129 contributes to the Mg(2+) binding site. A substrate-binding site is contributed by Gln-253. Asp-281 is a binding site for Mg(2+). Residue 325–327 (ESQ) coordinates substrate. Residues Asp-513 and Gly-550 each coordinate ATP. Asn-551 contacts Mg(2+). Ser-553 contributes to the substrate binding site.

Belongs to the FGAMS family. As to quaternary structure, monomer. Part of the FGAM synthase complex composed of 1 PurL, 1 PurQ and 2 PurS subunits.

It localises to the cytoplasm. It catalyses the reaction N(2)-formyl-N(1)-(5-phospho-beta-D-ribosyl)glycinamide + L-glutamine + ATP + H2O = 2-formamido-N(1)-(5-O-phospho-beta-D-ribosyl)acetamidine + L-glutamate + ADP + phosphate + H(+). Its pathway is purine metabolism; IMP biosynthesis via de novo pathway; 5-amino-1-(5-phospho-D-ribosyl)imidazole from N(2)-formyl-N(1)-(5-phospho-D-ribosyl)glycinamide: step 1/2. Its function is as follows. Part of the phosphoribosylformylglycinamidine synthase complex involved in the purines biosynthetic pathway. Catalyzes the ATP-dependent conversion of formylglycinamide ribonucleotide (FGAR) and glutamine to yield formylglycinamidine ribonucleotide (FGAM) and glutamate. The FGAM synthase complex is composed of three subunits. PurQ produces an ammonia molecule by converting glutamine to glutamate. PurL transfers the ammonia molecule to FGAR to form FGAM in an ATP-dependent manner. PurS interacts with PurQ and PurL and is thought to assist in the transfer of the ammonia molecule from PurQ to PurL. The chain is Phosphoribosylformylglycinamidine synthase subunit PurL from Streptomyces coelicolor (strain ATCC BAA-471 / A3(2) / M145).